Here is a 490-residue protein sequence, read N- to C-terminus: MNNMAVRVRFCPSPTGTPHVGLIRTALFNWAYARHTGGTFVFRIEDTDSARDSEESYQAILDALNWLGLDYDEGPEIGGPYAPYRQSQRRDLYRDVIDRLIAAGEAYEAYSTAEEVEARHLAAGRNPKLGYDNFDRDLTDEQRAAHRAEGRNPVIRLRMPERDITWRDLVRGETTFGAGTMPDFALTRGNGEPLYTLVNPVDDALMKITHVLRGEDLLPSTPRQIALYEALIRIGVADGVPEFAHLPSVLGDGNKKLSKRDPQSNLFLHRDRGFIPEGLLNYLALLGWGIADDRDVFGLDEMVAAFDVVDVNSNPARFDQKKADALNAEHIRLLSEDEFTARLKAYFAAHGHDTGLDDAQFAEAARLVQTRIVVLGDAWGLLKFLDEGAFVLDERAAAKELKADAVPVLDAALAGLEGVGQWTTGAIEEALKKALLEDLELKPRKAFGPIRVAATGASVSPPLFESLELLGRDRSLARLRAGRDHAAAAA.

A 'HIGH' region motif is present at residues 12-22; sequence PSPTGTPHVGL. Positions 256 to 260 match the 'KMSKS' region motif; sequence KLSKR. Lys259 contributes to the ATP binding site.

This sequence belongs to the class-I aminoacyl-tRNA synthetase family. Glutamate--tRNA ligase type 1 subfamily. As to quaternary structure, monomer.

It localises to the cytoplasm. The catalysed reaction is tRNA(Glu) + L-glutamate + ATP = L-glutamyl-tRNA(Glu) + AMP + diphosphate. Functionally, catalyzes the attachment of glutamate to tRNA(Glu) in a two-step reaction: glutamate is first activated by ATP to form Glu-AMP and then transferred to the acceptor end of tRNA(Glu). This is Glutamate--tRNA ligase from Mycobacterium sp. (strain JLS).